Reading from the N-terminus, the 242-residue chain is Small ribosomal subunit protein uS2 (242 aa).

Belongs to the universal ribosomal protein uS2 family.

The polypeptide is Small ribosomal subunit protein uS2 (Shouchella clausii (strain KSM-K16) (Alkalihalobacillus clausii)).